A 322-amino-acid polypeptide reads, in one-letter code: Phosphoserine phosphatase (322 aa).

Substrate is bound at residue 10-12; the sequence is PED. 3 residues coordinate Mg(2+): D12, D116, and D118. Residue D116 is the Nucleophile of the active site. Residue D118 is the Proton donor of the active site. Substrate is bound by residues E125, R161, 204-205, and K249; that span reads SG. Residue D272 coordinates Mg(2+). N275 is a binding site for substrate.

Belongs to the HAD-like hydrolase superfamily. SerB family. Requires Mg(2+) as cofactor.

It carries out the reaction O-phospho-L-serine + H2O = L-serine + phosphate. The enzyme catalyses O-phospho-D-serine + H2O = D-serine + phosphate. It functions in the pathway amino-acid biosynthesis; L-serine biosynthesis; L-serine from 3-phospho-D-glycerate: step 3/3. Its function is as follows. Catalyzes the dephosphorylation of phosphoserine (P-Ser). In Escherichia coli O157:H7, this protein is Phosphoserine phosphatase (serB).